We begin with the raw amino-acid sequence, 429 residues long: UDP-N-acetylglucosamine 1-carboxyvinyltransferase (429 aa).

22 to 23 (KN) lines the phosphoenolpyruvate pocket. Arginine 102 is a binding site for UDP-N-acetyl-alpha-D-glucosamine. Cysteine 126 serves as the catalytic Proton donor. Cysteine 126 bears the 2-(S-cysteinyl)pyruvic acid O-phosphothioketal mark. Residues 131 to 135 (RPVDL), aspartate 316, and isoleucine 338 each bind UDP-N-acetyl-alpha-D-glucosamine.

It belongs to the EPSP synthase family. MurA subfamily.

The protein localises to the cytoplasm. The catalysed reaction is phosphoenolpyruvate + UDP-N-acetyl-alpha-D-glucosamine = UDP-N-acetyl-3-O-(1-carboxyvinyl)-alpha-D-glucosamine + phosphate. The protein operates within cell wall biogenesis; peptidoglycan biosynthesis. In terms of biological role, cell wall formation. Adds enolpyruvyl to UDP-N-acetylglucosamine. This Rhodopseudomonas palustris (strain BisB18) protein is UDP-N-acetylglucosamine 1-carboxyvinyltransferase.